Consider the following 196-residue polypeptide: Putative 3-methyladenine DNA glycosylase (196 aa).

Belongs to the DNA glycosylase MPG family.

This chain is Putative 3-methyladenine DNA glycosylase, found in Bacillus velezensis (strain DSM 23117 / BGSC 10A6 / LMG 26770 / FZB42) (Bacillus amyloliquefaciens subsp. plantarum).